Reading from the N-terminus, the 322-residue chain is Solute carrier family 35 member B1 (322 aa).

The next 8 helical transmembrane spans lie at 12 to 32, 51 to 71, 85 to 105, 136 to 156, 168 to 188, 210 to 230, 243 to 263, and 285 to 305; these read LRLPLCFLGVFVCYFYYGILQ, FALTLVFIQCVINAMFAKILI, WLYAACSVSYVGAMVSSNSAL, YPLAKYLCVLLIVAGVALFMY, TVGFGELLLLLSLTLDGLTGV, LWSTVLLGAGILFTGELWEFL, ILLFGLTSALGQSFIFMTVVY, and VILFANPISSMQWVGTVLVFL. A Di-lysine motif motif is present at residues 318 to 322; the sequence is KKTSH.

Belongs to the nucleotide-sugar transporter family. SLC35B subfamily.

It is found in the endoplasmic reticulum membrane. The enzyme catalyses ADP(in) + ATP(out) = ADP(out) + ATP(in). It catalyses the reaction UDP(out) + ATP(in) = UDP(in) + ATP(out). The catalysed reaction is UTP(out) + ATP(in) = UTP(in) + ATP(out). It carries out the reaction dATP(out) + ATP(in) = dATP(in) + ATP(out). ATP:ADP antiporter that catalyzes the exchange of ATP and ADP across the endoplasmic reticulum (ER) membrane. Imports ATP from the cytosol to the ER lumen and exports ADP in the opposite direction. Regulates ER energy metabolism and protein biogenesis. Appears to be part of a calcium-dependent ER to cytosol low energy response axis, where calcium efflux from ER to the cytosol triggers ATP import into the ER lumen to maintain sufficient ATP supply. Provides ATP to ER chaperone HSPA5 that drives protein folding and trafficking in the ER. Can transport dATP, UTP or UDP in exchange for ATP, but the physiological relevance of this process remains to be established. This chain is Solute carrier family 35 member B1 (Slc35b1), found in Rattus norvegicus (Rat).